Here is a 515-residue protein sequence, read N- to C-terminus: Cyclic AMP receptor-like protein G (515 aa).

Topologically, residues 1-16 (MSSIIFIPNDADNINS) are extracellular. Residues 17-37 (IMVTISSSLSLVGCLFILSIY) form a helical membrane-spanning segment. The Cytoplasmic segment spans residues 38 to 50 (IYYKELREFQLKL). A helical transmembrane segment spans residues 51–71 (IFIMTINDFIISIIFLIATHI). Residues 72-92 (QTKYFDAITNVFPFFCNFPDS) lie on the Extracellular side of the membrane. Residues 93–113 (LLHYFFLSSFFWEVCIAHTLI) form a helical membrane-spanning segment. Topologically, residues 114–129 (QVIKYNNDKVEDNLKK) are cytoplasmic. The helical transmembrane segment at 130–150 (YFIFSNGLSALIMVSLFFIRS) threads the bilayer. The Extracellular portion of the chain corresponds to 151-164 (YSKIDCHHDSIFPH). A helical transmembrane segment spans residues 165 to 185 (LLFFIPLLLTWIYNIIVCALL). The Cytoplasmic portion of the chain corresponds to 186–276 (TKTFKEQAMN…IRKTPNIIWT (91 aa)). Residues 277–297 (SIFFLFSFGFIWSWSILVIIL) form a helical membrane-spanning segment. Residues 298-306 (KYLSLDVKY) lie on the Extracellular side of the membrane. A helical transmembrane segment spans residues 307–327 (ILMISYFFIPLHGCMNAVCFG). At 328-515 (VNDRLRMNLK…FCTIDEDETK (188 aa)) the chain is on the cytoplasmic side. The segment covering 362–375 (NGNNKNNKNNNGAN) has biased composition (low complexity). Disordered regions lie at residues 362 to 409 (NGNN…YYQI) and 469 to 515 (NNNN…DETK). Acidic residues predominate over residues 385 to 396 (SPDDDDDEDDDN). Composition is skewed to low complexity over residues 397–407 (NNNNYSDGNYY) and 469–504 (NNNN…NNNN).

This sequence belongs to the G-protein coupled receptor 5 family.

The protein localises to the membrane. Its function is as follows. Receptor for cAMP. The sequence is that of Cyclic AMP receptor-like protein G (crlG) from Dictyostelium discoideum (Social amoeba).